The primary structure comprises 149 residues: Cell division protein SepF (149 aa).

This sequence belongs to the SepF family. As to quaternary structure, homodimer. Interacts with FtsZ.

It is found in the cytoplasm. Cell division protein that is part of the divisome complex and is recruited early to the Z-ring. Probably stimulates Z-ring formation, perhaps through the cross-linking of FtsZ protofilaments. Its function overlaps with FtsA. This chain is Cell division protein SepF, found in Pelotomaculum thermopropionicum (strain DSM 13744 / JCM 10971 / SI).